Here is a 247-residue protein sequence, read N- to C-terminus: Small ribosomal subunit protein uS2 (247 aa).

The protein belongs to the universal ribosomal protein uS2 family.

The chain is Small ribosomal subunit protein uS2 from Fusobacterium nucleatum subsp. nucleatum (strain ATCC 25586 / DSM 15643 / BCRC 10681 / CIP 101130 / JCM 8532 / KCTC 2640 / LMG 13131 / VPI 4355).